A 268-amino-acid chain; its full sequence is Undecaprenyl-diphosphatase (268 aa).

Helical transmembrane passes span 9 to 29 (VILGVVEGVTEFLPVSSTGHL), 47 to 67 (FDVLIQLGAILAILALYFAKL), 83 to 103 (FIIGVLVAFLPAAVIGAAAGS), 107 to 127 (LFLFNPWVVCFSLIVGGAVLL), 144 to 164 (FPVLMYFYIGCAQCVAMIPGV), 184 to 204 (AAEFSFFLAIPTMVGAFVYDL), 218 to 238 (IVAVGFVVSFITAIIVVKTFL), and 246 to 266 (FQLFAWWRVVVGTLGLIALAM).

This sequence belongs to the UppP family.

It localises to the cell inner membrane. The enzyme catalyses di-trans,octa-cis-undecaprenyl diphosphate + H2O = di-trans,octa-cis-undecaprenyl phosphate + phosphate + H(+). Functionally, catalyzes the dephosphorylation of undecaprenyl diphosphate (UPP). Confers resistance to bacitracin. The chain is Undecaprenyl-diphosphatase from Rhodopseudomonas palustris (strain HaA2).